Consider the following 270-residue polypeptide: Glutamate 5-kinase (270 aa).

Lys15 contacts ATP. Substrate-binding residues include Ser55, Asp142, and Asn158. Residues 178–179 (SD) and 220–226 (TGGMLSK) each bind ATP.

This sequence belongs to the glutamate 5-kinase family.

The protein resides in the cytoplasm. It carries out the reaction L-glutamate + ATP = L-glutamyl 5-phosphate + ADP. It participates in amino-acid biosynthesis; L-proline biosynthesis; L-glutamate 5-semialdehyde from L-glutamate: step 1/2. Catalyzes the transfer of a phosphate group to glutamate to form L-glutamate 5-phosphate. The chain is Glutamate 5-kinase from Streptococcus uberis (strain ATCC BAA-854 / 0140J).